A 267-amino-acid chain; its full sequence is MSAGGAGGEAKGGYPPQTIMALGIVGGLVGIYLGNFAPPAYSFFGGLGAICATVWGADAVRRVASYGLGTGVPSIGMLALGMGILAALFGLSVGGTAGPIVAIVVAAIIGGVIGALANKVIGMGIPIMEKAMVEISCAGTLVILGLSVVIAGSFDFASVVQYVVANGYIALIFIIGGMGILHPFNASLGPDEKQDRTLMLAVEKGAIALIIAGFASSLHEGLMAAGLNMLIGIIIWYVAFSKHYALIKRDAYAVVGSGMLPSSEELQ.

7 helical membrane-spanning segments follow: residues 19–39, 75–95, 97–117, 140–160, 162–182, 198–218, and 221–241; these read IMAL…FAPP, IGML…SVGG, AGPI…GALA, TLVI…ASVV, YVVA…GILH, LMLA…ASSL, and GLMA…VAFS.

Belongs to the MtrC family. The complex is composed of 8 subunits; MtrA, MtrB, MtrC, MtrD, MtrE, MtrF, MtrG and MtrH.

It localises to the cell membrane. It carries out the reaction 5-methyl-5,6,7,8-tetrahydromethanopterin + coenzyme M + 2 Na(+)(in) = 5,6,7,8-tetrahydromethanopterin + methyl-coenzyme M + 2 Na(+)(out). Its pathway is one-carbon metabolism; methanogenesis from CO(2); methyl-coenzyme M from 5,10-methylene-5,6,7,8-tetrahydromethanopterin: step 2/2. Part of a complex that catalyzes the formation of methyl-coenzyme M and tetrahydromethanopterin from coenzyme M and methyl-tetrahydromethanopterin. This is an energy-conserving, sodium-ion translocating step. The chain is Tetrahydromethanopterin S-methyltransferase subunit C from Methanosarcina barkeri (strain Fusaro / DSM 804).